Reading from the N-terminus, the 318-residue chain is 4-hydroxy-3-methylbut-2-enyl diphosphate reductase (318 aa).

Cys12 is a [4Fe-4S] cluster binding site. (2E)-4-hydroxy-3-methylbut-2-enyl diphosphate is bound by residues His41 and His74. Dimethylallyl diphosphate is bound by residues His41 and His74. The isopentenyl diphosphate site is built by His41 and His74. [4Fe-4S] cluster is bound at residue Cys96. His124 lines the (2E)-4-hydroxy-3-methylbut-2-enyl diphosphate pocket. Residue His124 coordinates dimethylallyl diphosphate. Isopentenyl diphosphate is bound at residue His124. Residue Glu126 is the Proton donor of the active site. Thr168 contacts (2E)-4-hydroxy-3-methylbut-2-enyl diphosphate. Cys198 contacts [4Fe-4S] cluster. 4 residues coordinate (2E)-4-hydroxy-3-methylbut-2-enyl diphosphate: Ser226, Ser227, Asn228, and Ser270. Positions 226, 227, 228, and 270 each coordinate dimethylallyl diphosphate. Residues Ser226, Ser227, Asn228, and Ser270 each contribute to the isopentenyl diphosphate site.

This sequence belongs to the IspH family. [4Fe-4S] cluster is required as a cofactor.

It catalyses the reaction isopentenyl diphosphate + 2 oxidized [2Fe-2S]-[ferredoxin] + H2O = (2E)-4-hydroxy-3-methylbut-2-enyl diphosphate + 2 reduced [2Fe-2S]-[ferredoxin] + 2 H(+). The catalysed reaction is dimethylallyl diphosphate + 2 oxidized [2Fe-2S]-[ferredoxin] + H2O = (2E)-4-hydroxy-3-methylbut-2-enyl diphosphate + 2 reduced [2Fe-2S]-[ferredoxin] + 2 H(+). The protein operates within isoprenoid biosynthesis; dimethylallyl diphosphate biosynthesis; dimethylallyl diphosphate from (2E)-4-hydroxy-3-methylbutenyl diphosphate: step 1/1. Its pathway is isoprenoid biosynthesis; isopentenyl diphosphate biosynthesis via DXP pathway; isopentenyl diphosphate from 1-deoxy-D-xylulose 5-phosphate: step 6/6. Catalyzes the conversion of 1-hydroxy-2-methyl-2-(E)-butenyl 4-diphosphate (HMBPP) into a mixture of isopentenyl diphosphate (IPP) and dimethylallyl diphosphate (DMAPP). Acts in the terminal step of the DOXP/MEP pathway for isoprenoid precursor biosynthesis. This is 4-hydroxy-3-methylbut-2-enyl diphosphate reductase from Psychrobacter arcticus (strain DSM 17307 / VKM B-2377 / 273-4).